A 363-amino-acid polypeptide reads, in one-letter code: UDP-N-acetylglucosamine--N-acetylmuramyl-(pentapeptide) pyrophosphoryl-undecaprenol N-acetylglucosamine transferase (363 aa).

Residues 10–12, Asn124, Ser195, Ile250, and Gln295 contribute to the UDP-N-acetyl-alpha-D-glucosamine site; that span reads TGG.

Belongs to the glycosyltransferase 28 family. MurG subfamily.

The protein localises to the cell membrane. The enzyme catalyses di-trans,octa-cis-undecaprenyl diphospho-N-acetyl-alpha-D-muramoyl-L-alanyl-D-glutamyl-meso-2,6-diaminopimeloyl-D-alanyl-D-alanine + UDP-N-acetyl-alpha-D-glucosamine = di-trans,octa-cis-undecaprenyl diphospho-[N-acetyl-alpha-D-glucosaminyl-(1-&gt;4)]-N-acetyl-alpha-D-muramoyl-L-alanyl-D-glutamyl-meso-2,6-diaminopimeloyl-D-alanyl-D-alanine + UDP + H(+). It participates in cell wall biogenesis; peptidoglycan biosynthesis. Functionally, cell wall formation. Catalyzes the transfer of a GlcNAc subunit on undecaprenyl-pyrophosphoryl-MurNAc-pentapeptide (lipid intermediate I) to form undecaprenyl-pyrophosphoryl-MurNAc-(pentapeptide)GlcNAc (lipid intermediate II). The protein is UDP-N-acetylglucosamine--N-acetylmuramyl-(pentapeptide) pyrophosphoryl-undecaprenol N-acetylglucosamine transferase of Listeria monocytogenes serovar 1/2a (strain ATCC BAA-679 / EGD-e).